Here is a 199-residue protein sequence, read N- to C-terminus: Guanylyl cyclase-activating protein 1 (199 aa).

G2 is lipidated: N-myristoyl glycine. N3 carries the post-translational modification Deamidated asparagine. EF-hand domains lie at 13–48, 50–85, 86–121, and 129–164; these read SATE…KNLS, SANK…VLKG, KVDQ…IRAI, and TAEE…DEVL. Positions 63, 65, 67, 69, 74, 99, 101, 103, 105, 110, 142, 144, 146, 148, and 153 each coordinate Ca(2+).

In terms of tissue distribution, retina, in rod and cone outer segments, and pineal gland.

Functionally, stimulates retinal guanylyl cyclase when free calcium ions concentration is low and inhibits guanylyl cyclase when free calcium ions concentration is elevated. This Ca(2+)-sensitive regulation of retinal guanylyl cyclase is a key event in recovery of the dark state of rod photoreceptors following light exposure. This is Guanylyl cyclase-activating protein 1 (GUCA1A) from Gallus gallus (Chicken).